The sequence spans 279 residues: 3-methyl-2-oxobutanoate hydroxymethyltransferase (279 aa).

Mg(2+) contacts are provided by aspartate 43 and aspartate 82. Residues 43–44 (DS), aspartate 82, and lysine 112 contribute to the 3-methyl-2-oxobutanoate site. A Mg(2+)-binding site is contributed by glutamate 114. Glutamate 181 functions as the Proton acceptor in the catalytic mechanism.

The protein belongs to the PanB family. As to quaternary structure, homodecamer; pentamer of dimers. Requires Mg(2+) as cofactor.

The protein resides in the cytoplasm. The catalysed reaction is 3-methyl-2-oxobutanoate + (6R)-5,10-methylene-5,6,7,8-tetrahydrofolate + H2O = 2-dehydropantoate + (6S)-5,6,7,8-tetrahydrofolate. Its pathway is cofactor biosynthesis; (R)-pantothenate biosynthesis; (R)-pantoate from 3-methyl-2-oxobutanoate: step 1/2. Its function is as follows. Catalyzes the reversible reaction in which hydroxymethyl group from 5,10-methylenetetrahydrofolate is transferred onto alpha-ketoisovalerate to form ketopantoate. This Lysinibacillus sphaericus (strain C3-41) protein is 3-methyl-2-oxobutanoate hydroxymethyltransferase.